Reading from the N-terminus, the 270-residue chain is Protein ABHD14A (270 aa).

The chain crosses the membrane as a helical; Signal-anchor for type II membrane protein span at residues 9–29; it reads LVVLGLVLLATVLLYLLLPSM. Residue asparagine 61 is glycosylated (N-linked (GlcNAc...) asparagine). Residues serine 170 and aspartate 221 each act as charge relay system in the active site. Asparagine 237 is a glycosylation site (N-linked (GlcNAc...) asparagine). Histidine 248 acts as the Charge relay system in catalysis.

This sequence belongs to the AB hydrolase superfamily. ABHD14 family.

Its subcellular location is the cytoplasm. It is found in the membrane. Functionally, possible role in granule neuron development. This is Protein ABHD14A from Danio rerio (Zebrafish).